Consider the following 216-residue polypeptide: Adenylate kinase (216 aa).

10-15 contributes to the ATP binding site; sequence GAGKGT. The segment at 30–59 is NMP; that stretch reads STGDIFRAAIKNQTPMGVEAKKFIDKGELV. AMP contacts are provided by residues Thr31, Arg36, 57 to 59, 85 to 88, and Gln92; these read ELV and GFPR. The segment at 126 to 164 is LID; it reads GRFICRNCGTTYHRLYNPTKVEGTCDVCGGHDFYQRDDD. Arg127 contacts ATP. Zn(2+) contacts are provided by Cys130 and Cys133. ATP is bound at residue 136-137; that stretch reads TY. The Zn(2+) site is built by Cys150 and Cys153. AMP is bound by residues Arg161 and Arg172. Gln200 contacts ATP.

The protein belongs to the adenylate kinase family. As to quaternary structure, monomer.

The protein resides in the cytoplasm. The catalysed reaction is AMP + ATP = 2 ADP. It participates in purine metabolism; AMP biosynthesis via salvage pathway; AMP from ADP: step 1/1. Its function is as follows. Catalyzes the reversible transfer of the terminal phosphate group between ATP and AMP. Plays an important role in cellular energy homeostasis and in adenine nucleotide metabolism. In Limosilactobacillus fermentum (strain NBRC 3956 / LMG 18251) (Lactobacillus fermentum), this protein is Adenylate kinase.